We begin with the raw amino-acid sequence, 207 residues long: Holliday junction branch migration complex subunit RuvA (207 aa).

Positions Met-1 to Ile-64 are domain I. The segment at Asp-65–Glu-143 is domain II. Positions Phe-144 to Ser-152 are flexible linker. Residues Ala-153–Lys-207 are domain III.

This sequence belongs to the RuvA family. As to quaternary structure, homotetramer. Forms an RuvA(8)-RuvB(12)-Holliday junction (HJ) complex. HJ DNA is sandwiched between 2 RuvA tetramers; dsDNA enters through RuvA and exits via RuvB. An RuvB hexamer assembles on each DNA strand where it exits the tetramer. Each RuvB hexamer is contacted by two RuvA subunits (via domain III) on 2 adjacent RuvB subunits; this complex drives branch migration. In the full resolvosome a probable DNA-RuvA(4)-RuvB(12)-RuvC(2) complex forms which resolves the HJ.

Its subcellular location is the cytoplasm. In terms of biological role, the RuvA-RuvB-RuvC complex processes Holliday junction (HJ) DNA during genetic recombination and DNA repair, while the RuvA-RuvB complex plays an important role in the rescue of blocked DNA replication forks via replication fork reversal (RFR). RuvA specifically binds to HJ cruciform DNA, conferring on it an open structure. The RuvB hexamer acts as an ATP-dependent pump, pulling dsDNA into and through the RuvAB complex. HJ branch migration allows RuvC to scan DNA until it finds its consensus sequence, where it cleaves and resolves the cruciform DNA. This chain is Holliday junction branch migration complex subunit RuvA, found in Psychrobacter arcticus (strain DSM 17307 / VKM B-2377 / 273-4).